Reading from the N-terminus, the 258-residue chain is DNA repair protein RecO (258 aa).

It belongs to the RecO family.

In terms of biological role, involved in DNA repair and RecF pathway recombination. The protein is DNA repair protein RecO of Lactiplantibacillus plantarum (strain ATCC BAA-793 / NCIMB 8826 / WCFS1) (Lactobacillus plantarum).